A 515-amino-acid chain; its full sequence is 13S globulin seed storage protein (515 aa).

Positions 1–22 (MSTKLILSFSLCLMVLSCSAQA) are cleaved as a signal peptide. Positions 23-96 (AQLWPWRKGQ…RYVIQPGGLL (74 aa)) are igE-binding epitope. 2 disulfides stabilise this stretch: Cys47-Cys80 and Cys123-Cys327. In terms of domain architecture, Cupin type-1 1 spans 52 to 272 (LTASEPSRRV…FRDVDRETIS (221 aa)). An igE-binding epitope with a very strong IgE-binding activity region spans residues 97–172 (LPSYSNAPYI…REGDVIPSPA (76 aa)). 3 disordered regions span residues 123–156 (CPETFQSDSEYPQSQRGQHSRESESQESSRGDQH), 210–241 (LAGQSQQGREERRSQQQTREEGGDRQSRESDD), and 295–320 (PEDSEEGYERQRGDRKRDERGSGRSN). Basic and acidic residues-rich tracts occupy residues 141–156 (HSRESESQESSRGDQH), 217–239 (GREERRSQQQTREEGGDRQSRES), and 295–316 (PEDSEEGYERQRGDRKRDERGS). IgE-binding epitope stretches follow at residues 173–248 (GVVQ…LIGA) and 249–320 (NILS…GRSN). Residues 333–482 (QNVNRPSHAD…SYDISTEEAY (150 aa)) enclose the Cupin type-1 2 domain. The segment at 347 to 387 (RAGRINTVNSNNLPILEFLQLSAQHVVLYKNAIIGPRWNLN) is igE-binding epitope with a strong IgE-binding activity. 3 igE-binding epitope regions span residues 407–457 (EGKS…PIAG), 440–476 (EWVELKNNDNAITSPIAGRTSVLRAIPVEVLANSYDI), and 475–511 (DISTEEAYKLKNGRQEVEVFRPFQSRYEKEEEKERER).

Belongs to the 11S seed storage protein (globulins) family. In terms of assembly, homohexamer. In terms of processing, proteolytically processed from a single precursor to produce an acidic and a basic chain that are linked by a disulfide bond. In terms of tissue distribution, expressed in seeds (at protein level).

Functionally, seed storage protein. This is 13S globulin seed storage protein from Fagopyrum tataricum (Tartarian buckwheat).